The following is a 160-amino-acid chain: MARPVHPEFDKKKVVAENRRARFEYFIEETYEAGICLTGTEVKSLRFGEGSIAESYAEVKNGEVWLVNSNVPEFSHGNRFNHVPKRPRKLLLKERQIAKFTGAVERKGMTLVPLSIYFNSRGRAKVELALAKGKNAADKRTTIKERDWKREKARIMKDHG.

The protein belongs to the SmpB family.

It is found in the cytoplasm. Its function is as follows. Required for rescue of stalled ribosomes mediated by trans-translation. Binds to transfer-messenger RNA (tmRNA), required for stable association of tmRNA with ribosomes. tmRNA and SmpB together mimic tRNA shape, replacing the anticodon stem-loop with SmpB. tmRNA is encoded by the ssrA gene; the 2 termini fold to resemble tRNA(Ala) and it encodes a 'tag peptide', a short internal open reading frame. During trans-translation Ala-aminoacylated tmRNA acts like a tRNA, entering the A-site of stalled ribosomes, displacing the stalled mRNA. The ribosome then switches to translate the ORF on the tmRNA; the nascent peptide is terminated with the 'tag peptide' encoded by the tmRNA and targeted for degradation. The ribosome is freed to recommence translation, which seems to be the essential function of trans-translation. This Novosphingobium aromaticivorans (strain ATCC 700278 / DSM 12444 / CCUG 56034 / CIP 105152 / NBRC 16084 / F199) protein is SsrA-binding protein.